We begin with the raw amino-acid sequence, 314 residues long: Malate dehydrogenase (314 aa).

Residues 11-16 and Asp35 each bind NAD(+); that span reads GSGNIG. Residues Arg84 and Arg90 each coordinate substrate. Residues Asn97 and 120–122 contribute to the NAD(+) site; that span reads ITN. Substrate is bound by residues Asn122 and Arg153. The Proton acceptor role is filled by His177.

Belongs to the LDH/MDH superfamily. MDH type 3 family.

It carries out the reaction (S)-malate + NAD(+) = oxaloacetate + NADH + H(+). In terms of biological role, catalyzes the reversible oxidation of malate to oxaloacetate. This chain is Malate dehydrogenase, found in Rickettsia africae (strain ESF-5).